Consider the following 62-residue polypeptide: Pro-MCH variant (62 aa).

The interval 23–41 (GSVAFPAENGVQDTESTQE) is NGE-like. The interval 28-62 (PAENGVQDTESTQEKRETGDEENSAQFPIGRRDFD) is disordered. The NEI-like stretch occupies residues 44–56 (ETGDEENSAQFPI). Residues 60-62 (DFD) form a melanin-concentrating hormone-like region.

Belongs to the melanin-concentrating hormone family.

The protein is Pro-MCH variant (PMCHL1) of Hylobates lar (Lar gibbon).